A 623-amino-acid polypeptide reads, in one-letter code: AFI1-like protein C776.06c (623 aa).

The uDENN domain occupies 5–204 (DYLLTAIFDP…IDNIPKPGSE (200 aa)). The cDENN domain maps to 248 to 386 (ISNLINTFID…SDATTTMDTK (139 aa)). Residues 388–476 (LFNNTSPFTP…WSWDNDDEKV (89 aa)) form the dDENN domain.

The protein belongs to the AFI1/mesA family.

It localises to the cytoplasm. Its subcellular location is the cell cortex. It is found in the nucleus. Involved in polarity establishment. This chain is AFI1-like protein C776.06c, found in Schizosaccharomyces pombe (strain 972 / ATCC 24843) (Fission yeast).